The following is a 231-amino-acid chain: Ribonuclease 3 (231 aa).

In terms of domain architecture, RNase III spans Met3 to Thr130. Glu43 is a binding site for Mg(2+). The active site involves Asp47. 2 residues coordinate Mg(2+): Asp116 and Glu119. The active site involves Glu119. One can recognise a DRBM domain in the interval Asp157 to Lys228.

The protein belongs to the ribonuclease III family. In terms of assembly, homodimer. Mg(2+) serves as cofactor.

Its subcellular location is the cytoplasm. It carries out the reaction Endonucleolytic cleavage to 5'-phosphomonoester.. Digests double-stranded RNA. Involved in the processing of primary rRNA transcript to yield the immediate precursors to the large and small rRNAs (23S and 16S). Processes some mRNAs, and tRNAs when they are encoded in the rRNA operon. Processes pre-crRNA and tracrRNA of type II CRISPR loci if present in the organism. The sequence is that of Ribonuclease 3 from Mesoplasma florum (strain ATCC 33453 / NBRC 100688 / NCTC 11704 / L1) (Acholeplasma florum).